Here is a 421-residue protein sequence, read N- to C-terminus: Serine--tRNA ligase (421 aa).

232–234 (TAE) lines the L-serine pocket. 262–264 (RSE) contributes to the ATP binding site. E285 is an L-serine binding site. ATP is bound at residue 349–352 (EVSS). Residue S384 participates in L-serine binding.

The protein belongs to the class-II aminoacyl-tRNA synthetase family. Type-1 seryl-tRNA synthetase subfamily. In terms of assembly, homodimer. The tRNA molecule binds across the dimer.

The protein resides in the cytoplasm. It catalyses the reaction tRNA(Ser) + L-serine + ATP = L-seryl-tRNA(Ser) + AMP + diphosphate + H(+). The enzyme catalyses tRNA(Sec) + L-serine + ATP = L-seryl-tRNA(Sec) + AMP + diphosphate + H(+). The protein operates within aminoacyl-tRNA biosynthesis; selenocysteinyl-tRNA(Sec) biosynthesis; L-seryl-tRNA(Sec) from L-serine and tRNA(Sec): step 1/1. Catalyzes the attachment of serine to tRNA(Ser). Is also able to aminoacylate tRNA(Sec) with serine, to form the misacylated tRNA L-seryl-tRNA(Sec), which will be further converted into selenocysteinyl-tRNA(Sec). This chain is Serine--tRNA ligase, found in Mycoplasma mobile (strain ATCC 43663 / 163K / NCTC 11711) (Mesomycoplasma mobile).